The following is a 947-amino-acid chain: Nonribosomal peptide synthetase ucdA (947 aa).

Residues 25-413 are adenylation (A) domain; the sequence is YSPHANAGYC…AGPVVFKEYF (389 aa). One can recognise a Carrier domain in the interval 585–665; it reads APENEFERDL…DLGTALRKLQ (81 aa). The residue at position 623 (Ser-623) is an O-(pantetheine 4'-phosphoryl)serine. Positions 684-934 are thioesterase (TE) domain; sequence PLWLVHPGVG…MLSPEHVFDF (251 aa).

It belongs to the NRP synthetase family.

It catalyses the reaction 2 3-(4-hydroxyphenyl)pyruvate + 2 ATP = atromentin + 2 AMP + 2 diphosphate + H(+). It functions in the pathway secondary metabolite biosynthesis. Functionally, nonribosomal peptide synthetase that mediates the biosynthesis of usterphenyllins and uscandidusins, p-terphenyl derivatives. Within the pathway, ucdA condenses two 4-hydroxyphenylpyruvate (HPPA) units to produce atromentin. UcdA first activates HPPA through its A domain to AMP-HPPA. The HPPA unit is then loaded to the T domain and eventually transferred to the TE domain. Another HPPA unit is then loaded onto the T domain. The TE domain then catalyzes the condensation of the two HPPA units and the release of atromentin via cyclization. The pathway begin with the biosynthesis of 4-hydroxyphenylpyruvate (HPPA) from L-tyrosine, possibly by the aminotransferase ucdG. The nonribosomal peptide synthetase ucdA then condenses two HPPA units to produce atromentin. The key step in this pathway is the reduction and dehydration of atromentin to form a terphenyl triol intermediate, performed by the NAD-dependent dehydrogenase ucdB. Further O-methylation by the methyltransferase ucdC forms terphenyllin carrying two methoxy moieties at C-9 and C-12, and subsequent dihydroxylation at C-3 of ring A and C-15 of ring C by the flavin-dependent oxygenase ucdD leads to 3,15-dihydroxyterphenyllin. Prenylation by ucdE at position C-5 of ring A forms usterphenyllin B, and is followed by a second prenylation at position C-14 of ring C to form usterphenyllin A. The following furan ring formation that leads to uscandidusins A and B was proven to be an unexpected spontaneous non-enzymatic reaction. The polypeptide is Nonribosomal peptide synthetase ucdA (Aspergillus ustus).